A 283-amino-acid polypeptide reads, in one-letter code: Thymidylate synthase (283 aa).

Arg22 is a binding site for dUMP. Catalysis depends on Cys160, which acts as the Nucleophile. Residues 180–183 (RSCD), Asn191, and 221–223 (HIY) each bind dUMP. Asp183 is a binding site for (6R)-5,10-methylene-5,6,7,8-tetrahydrofolate. (6R)-5,10-methylene-5,6,7,8-tetrahydrofolate is bound at residue Ser282.

This sequence belongs to the thymidylate synthase family. Bacterial-type ThyA subfamily. In terms of assembly, homodimer.

It is found in the cytoplasm. It catalyses the reaction dUMP + (6R)-5,10-methylene-5,6,7,8-tetrahydrofolate = 7,8-dihydrofolate + dTMP. The protein operates within pyrimidine metabolism; dTTP biosynthesis. Functionally, catalyzes the reductive methylation of 2'-deoxyuridine-5'-monophosphate (dUMP) to 2'-deoxythymidine-5'-monophosphate (dTMP) while utilizing 5,10-methylenetetrahydrofolate (mTHF) as the methyl donor and reductant in the reaction, yielding dihydrofolate (DHF) as a by-product. This enzymatic reaction provides an intracellular de novo source of dTMP, an essential precursor for DNA biosynthesis. The protein is Thymidylate synthase of Pseudoalteromonas translucida (strain TAC 125).